A 478-amino-acid polypeptide reads, in one-letter code: Methionine aminopeptidase 2 (478 aa).

The tract at residues 1-122 is disordered; sequence MAGVEEVAAS…TDPPSVPICD (122 aa). At A2 the chain carries N-acetylalanine. Basic residues predominate over residues 36 to 46; it reads KKKRRKKKKSK. S45 is modified (phosphoserine). The span at 55–79 shows a compositional bias: basic and acidic residues; it reads EPDKESGASVDEVARQLERSALEDK. A phosphoserine; alternate mark is found at S60 and S63. Residues S60 and S63 are each glycosylated (O-linked (GlcNAc) serine; alternate). S74 bears the Phosphoserine mark. Positions 80-92 are enriched in acidic residues; sequence ERDEDDEDGDGDG. The segment covering 97-109 has biased composition (basic residues); it reads GKKKKKKKKKRGP. H231 contributes to the substrate binding site. The a divalent metal cation site is built by D251, D262, and H331. A substrate-binding site is contributed by H339. Residues E364 and E459 each contribute to the a divalent metal cation site.

The protein belongs to the peptidase M24A family. Methionine aminopeptidase eukaryotic type 2 subfamily. In terms of assembly, interacts strongly with the eIF-2 gamma-subunit EIF2S3. Binds EIF2S1 at low magnesium concentrations. It depends on Co(2+) as a cofactor. Zn(2+) is required as a cofactor. The cofactor is Mn(2+). Fe(2+) serves as cofactor. In terms of processing, contains approximately 12 O-linked N-acetylglucosamine (GlcNAc) residues. O-glycosylation is required for EIF2S1 binding.

It localises to the cytoplasm. It catalyses the reaction Release of N-terminal amino acids, preferentially methionine, from peptides and arylamides.. Cotranslationally removes the N-terminal methionine from nascent proteins. The N-terminal methionine is often cleaved when the second residue in the primary sequence is small and uncharged (Met-Ala-, Cys, Gly, Pro, Ser, Thr, or Val). The catalytic activity of human METAP2 toward Met-Val peptides is consistently two orders of magnitude higher than that of METAP1, suggesting that it is responsible for processing proteins containing N-terminal Met-Val and Met-Thr sequences in vivo. In terms of biological role, protects eukaryotic initiation factor EIF2S1 from translation-inhibiting phosphorylation by inhibitory kinases such as EIF2AK2/PKR and EIF2AK1/HCR. Plays a critical role in the regulation of protein synthesis. In Homo sapiens (Human), this protein is Methionine aminopeptidase 2.